We begin with the raw amino-acid sequence, 550 residues long: MAELPTAPNGVSSGDYLHRSIDQLRSLTHLTTADLRTAQLVHDYKPFNINEFRQNVVERLDYSLKNGLVHHQQQQQQQQQQEMLQQQQQHQAHQEQQQQQQQQQQQHHHQQQQHHLKSSYSAPSSPPTPHEQQEQKYDPNRSPQRPLMSSGSNASSPEDDRRGSGGGPGGGGGGDGDQSKPYKCASCSKSFANSSYLSQHTRIHLGIKPYRCEICQRKFTQLSHLQQHIRTHTGDKPYKCRHAGCPKAFSQLSNLQSHSRCHQTDKPFKCNSCYKCFADEMTLLEHIPKHKDSKHLKTHICNLCGKSYTQETYLQKHLQKHAEKAEKQQQRHSSQVAAVQQHVPSGGIGLNLQRQAMNDVNAAYWAKMGADSAAASLAEAIQQQLPQTNGQTYANFATLQQHQQQQQQQQQDMLQQHHQRLADTPGHSHSPHEDPAGEDLVLRQTTPQHHLQQQQQQQQPSPGPGSSAFTPLSATVPPSHLQQHRGAPAATAAYLYQQNAAAAAAAFPTQLISLHQIRNYAHQPGAAGLIAGDHLTLGLSAVQAAKEKAQ.

The span at 73-105 (QQQQQQQQQEMLQQQQQHQAHQEQQQQQQQQQQ) shows a compositional bias: low complexity. A disordered region spans residues 73–179 (QQQQQQQQQE…GGGGGDGDQS (107 aa)). The span at 106 to 117 (QHHHQQQQHHLK) shows a compositional bias: basic residues. Residues 141–156 (RSPQRPLMSSGSNASS) show a composition bias toward polar residues. Over residues 164 to 176 (SGGGPGGGGGGDG) the composition is skewed to gly residues. C2H2-type zinc fingers lie at residues 182 to 204 (YKCA…TRIH), 210 to 232 (YRCE…IRTH), 238 to 262 (YKCR…SRCH), 268 to 290 (FKCN…IPKH), and 299 to 321 (HICN…LQKH). A disordered region spans residues 399 to 485 (LQQHQQQQQQ…VPPSHLQQHR (87 aa)). The span at 400 to 416 (QQHQQQQQQQQQDMLQQ) shows a compositional bias: low complexity. Threonine 424 is subject to Phosphothreonine. Residues serine 428 and serine 430 each carry the phosphoserine modification. The span at 444–460 (QTTPQHHLQQQQQQQQP) shows a compositional bias: low complexity. Tyrosine 494 and tyrosine 496 each carry phosphotyrosine.

It belongs to the krueppel C2H2-type zinc-finger protein family. In terms of assembly, interacts with nab; which acts as a coactivator. Interacts with ap.

The protein resides in the nucleus. Transcription factor involved in neuronal fate specification. First required in embryonic CNS development to define the number of cells that express apterous (ap) in the ap thoracic cluster of interneurons. Later on, it plays a central role in the combinatorial code of transcription factors that specifies the fate of the Tv neuron in the ap cluster by participating in the transcription regulation of FMRFa in Tv cells. Also required for projection neuron dendritic targeting. The sequence is that of Zinc finger protein squeeze (sqz) from Drosophila pseudoobscura pseudoobscura (Fruit fly).